Reading from the N-terminus, the 545-residue chain is Ubiquitin carboxyl-terminal hydrolase 17-like protein D (545 aa).

One can recognise a USP domain in the interval 51–348 (CGLQNTGNSC…NAYVLFYVQQ (298 aa)). The active-site Nucleophile is Cys-60. The Proton acceptor role is filled by His-307. Disordered regions lie at residues 367–443 (LDPE…KLGQ) and 521–545 (RQEG…LLVR). A compositionally biased stretch (basic residues) spans 374 to 385 (KKSRRKKHKKKS). The span at 393-404 (EPSKNREKKATK) shows a compositional bias: basic and acidic residues. Basic residues predominate over residues 524-537 (GRRRSKKGKNKNKQ).

This sequence belongs to the peptidase C19 family. USP17 subfamily. In terms of tissue distribution, detected in T-cell, myeloid, and embryonic stem cell lines.

The protein resides in the nucleus. It is found in the endoplasmic reticulum. It carries out the reaction Thiol-dependent hydrolysis of ester, thioester, amide, peptide and isopeptide bonds formed by the C-terminal Gly of ubiquitin (a 76-residue protein attached to proteins as an intracellular targeting signal).. In terms of biological role, deubiquitinating enzyme that removes conjugated ubiquitin from specific proteins to regulate different cellular processes that may include cell proliferation, progression through the cell cycle, apoptosis, cell migration, and the cellular response to viral infection. The polypeptide is Ubiquitin carboxyl-terminal hydrolase 17-like protein D (Mus musculus (Mouse)).